Reading from the N-terminus, the 480-residue chain is MEAAMNNHDGDCCKSGPGYATPLLAMSGPREKLIYVAAIYTGTGQAKPDYLATVDVEPSSSTYSSVIHRLPMPYLEDELHHSGWNSCSSCYGDSSCERRYLILPSLLSGRIYVIDTKTNPREPSLHKFVDPAEVLEKTGLAYPHQPHCLASGDVLVSCLGDEDGNAEGSGFLLLDSEFNIKGRWEKDGNSPLYGYDFWYQPRHKTMISTSWGAPAAFTKGFDLKDVSDGLYGKHLHVYSWPQGELKQILDLGDTGLLPLEVRFLHEPDKATGFAGCALSSTLVRFFKNDDETWSHEVAISVEPLKVENWILPEMPGLITDFLISLDDRFLYCSNWLHGDIRQYNIEDPKTPVLTGQIHVGGLVQKGSLVLALGEEGKAFQFDVPKIKGQRLRGGPQMFQLSLDGKRLYVTNSLFSVWDRQFYPELVEKGSHMLQIDVDTDKGGLSINPNFFVDFGTEPDGPSLAHEMRYPGGDCTSDIWV.

Positions 12 and 13 each coordinate selenite.

It belongs to the selenium-binding protein family. Expressed in young seedlings, mostly in roots.

The sequence is that of Selenium-binding protein 3 (SBP3) from Arabidopsis thaliana (Mouse-ear cress).